Reading from the N-terminus, the 386-residue chain is Patatin-06 (386 aa).

A signal peptide spans 1–23; the sequence is MATTKSFLILFFMILATTSSTCA. Residues 32–229 enclose the PNPLA domain; sequence LSIDGGGIKG…TVGDPALLSL (198 aa). Residues 36–41 carry the GXGXXG motif; that stretch reads GGGIKG. A GXSXG motif is present at residues 75–79; the sequence is GTSTG. Residue Ser77 is the Nucleophile of the active site. The N-linked (GlcNAc...) asparagine glycan is linked to Asn115. The active-site Proton acceptor is Asp215. The short motif at 215-217 is the DGA/G element; that stretch reads DGG. Residues 321-384 adopt a coiled-coil conformation; the sequence is ENALTGTTTE…NRKKLRANKA (64 aa).

The protein belongs to the patatin family. In terms of tissue distribution, tuber.

It localises to the vacuole. Its function is as follows. Probable lipolytic acyl hydrolase (LAH), an activity which is thought to be involved in the response of tubers to pathogens. This Solanum tuberosum (Potato) protein is Patatin-06.